Reading from the N-terminus, the 1391-residue chain is CAP-Gly domain-containing linker protein 1 (1391 aa).

Residues Met1–Glu53 are disordered. A Phosphoserine modification is found at Ser48. The residue at position 50 (Thr50) is a Phosphothreonine. Positions Gly78–Arg120 constitute a CAP-Gly 1 domain. An important for tubulin binding region spans residues Gly97 to Gly101. Residues Gln129–Pro182 are disordered. Ser146 is subject to Phosphoserine. Residues Ser146–Pro182 are compositionally biased toward polar residues. Thr181 is subject to Phosphothreonine. Residues Ser194, Ser196, Ser199, and Ser203 each carry the phosphoserine modification. Residues Gly231–Pro273 form the CAP-Gly 2 domain. The span at Thr302–Arg331 shows a compositional bias: low complexity. The disordered stretch occupies residues Thr302 to Thr336. Ser309 is subject to Phosphoserine. Position 311 is a phosphoserine; by PKA (Ser311). Ser314, Ser347, and Ser1189 each carry phosphoserine. A coiled-coil region spans residues Thr349 to Asn1306. The tract at residues Lys1251–Gln1272 is disordered. At Ser1317 the chain carries Phosphoserine. A CCHC-type zinc finger spans residues Pro1370–Asp1387.

Interacts with MTOR; phosphorylates and regulates CLIP1. Interacts (via CAP-Gly domains) with tubulin. Interacts with SLAIN2. Interacts with TUBA1B, MAPRE1 and MAPRE3. Interacts (via zinc finger) with DCTN1. Binds preferentially to tyrosinated microtubules, and only marginally to detyrosinated microtubules. In terms of processing, phosphorylated. Phosphorylation induces conformational changes by increasing the affinity of the N-terminus for C-terminus, resulting in inhibition of its function thus decreasing its binding to microtubules and DCTN1. Exhibits a folded, autoinhibited conformation when phosphorylated and an open conformation when dephosphorylated with increased binding affinity to microtubules and DCTN1. Phosphorylation regulates its recruitment to tyrosinated microtubules and the recruitment of vesicular cargo to microtubules in neurons. Phosphorylation by MTOR may positively regulate CLIP1 association with microtubules. Expressed in the testes (at protein level).

Its subcellular location is the cytoplasm. It is found in the cytoskeleton. The protein localises to the cytoplasmic vesicle membrane. The protein resides in the cell projection. It localises to the ruffle. Its function is as follows. Binds to the plus end of microtubules and regulates the dynamics of the microtubule cytoskeleton. Promotes microtubule growth and microtubule bundling. Links cytoplasmic vesicles to microtubules and thereby plays an important role in intracellular vesicle trafficking. Plays a role macropinocytosis and endosome trafficking. The sequence is that of CAP-Gly domain-containing linker protein 1 (Clip1) from Mus musculus (Mouse).